A 63-amino-acid chain; its full sequence is Large ribosomal subunit protein uL29 (63 aa).

Belongs to the universal ribosomal protein uL29 family.

This Haemophilus influenzae (strain 86-028NP) protein is Large ribosomal subunit protein uL29.